The primary structure comprises 335 residues: Tryptophan--tRNA ligase (335 aa).

Residues 19 to 21 (QPS) and 28 to 29 (GN) each bind ATP. A 'HIGH' region motif is present at residues 20-29 (PSSGMLHLGN). D143 contacts L-tryptophan. Residues 155–157 (GAD), I192, and 201–205 (KMSKS) contribute to the ATP site. The 'KMSKS' region motif lies at 201 to 205 (KMSKS).

This sequence belongs to the class-I aminoacyl-tRNA synthetase family. In terms of assembly, homodimer.

The protein resides in the cytoplasm. It carries out the reaction tRNA(Trp) + L-tryptophan + ATP = L-tryptophyl-tRNA(Trp) + AMP + diphosphate + H(+). In terms of biological role, catalyzes the attachment of tryptophan to tRNA(Trp). The protein is Tryptophan--tRNA ligase of Tropheryma whipplei (strain Twist) (Whipple's bacillus).